Consider the following 217-residue polypeptide: UPF0502 protein VF_A0604 (217 aa).

This sequence belongs to the UPF0502 family.

In Aliivibrio fischeri (strain ATCC 700601 / ES114) (Vibrio fischeri), this protein is UPF0502 protein VF_A0604.